A 372-amino-acid polypeptide reads, in one-letter code: N-methyl-L-tryptophan oxidase (372 aa).

4 to 34 lines the FAD pocket; sequence DLIIIGSGSVGAAAGYYATRAGLKVLMTDAH. Cys307 is subject to S-8alpha-FAD cysteine.

Belongs to the MSOX/MTOX family. MTOX subfamily. In terms of assembly, monomer. Requires FAD as cofactor.

It carries out the reaction N(alpha)-methyl-L-tryptophan + O2 + H2O = L-tryptophan + formaldehyde + H2O2. Catalyzes the oxidative demethylation of N-methyl-L-tryptophan. This is N-methyl-L-tryptophan oxidase from Salmonella dublin (strain CT_02021853).